A 204-amino-acid chain; its full sequence is Recombination protein RecR (204 aa).

Residues Cys58–Cys75 form a C4-type zinc finger. The 99-residue stretch at Thr83–Pro181 folds into the Toprim domain.

The protein belongs to the RecR family.

Its function is as follows. May play a role in DNA repair. It seems to be involved in an RecBC-independent recombinational process of DNA repair. It may act with RecF and RecO. This is Recombination protein RecR from Chlorobium chlorochromatii (strain CaD3).